The sequence spans 297 residues: Glycerol-3-phosphate dehydrogenase [NAD(P)+] (297 aa).

NADPH-binding residues include Trp-11, Arg-33, and Lys-79. 3 residues coordinate sn-glycerol 3-phosphate: Lys-79, Gly-107, and Ser-109. Ala-111 is an NADPH binding site. Sn-glycerol 3-phosphate is bound by residues Lys-161, Asp-214, Ser-224, Arg-225, and Asn-226. Lys-161 acts as the Proton acceptor in catalysis. Arg-225 contacts NADPH. Residues Val-249 and Glu-251 each contribute to the NADPH site.

It belongs to the NAD-dependent glycerol-3-phosphate dehydrogenase family.

It is found in the cytoplasm. The enzyme catalyses sn-glycerol 3-phosphate + NAD(+) = dihydroxyacetone phosphate + NADH + H(+). The catalysed reaction is sn-glycerol 3-phosphate + NADP(+) = dihydroxyacetone phosphate + NADPH + H(+). It functions in the pathway membrane lipid metabolism; glycerophospholipid metabolism. Catalyzes the reduction of the glycolytic intermediate dihydroxyacetone phosphate (DHAP) to sn-glycerol 3-phosphate (G3P), the key precursor for phospholipid synthesis. This Campylobacter jejuni subsp. doylei (strain ATCC BAA-1458 / RM4099 / 269.97) protein is Glycerol-3-phosphate dehydrogenase [NAD(P)+].